A 396-amino-acid chain; its full sequence is MRATWKGVISFGLVSIPVRLYSATQERDVAFHQVRRSDGSRIRYRRVAEADGDEVNYADIAKGYELPDGETVVLTDEDFANLPLSTSRAIDVLEFVPLEQVDPIYFAKSYYVEPDRTGAKPYVLLRDALAASGRVALVKIALRQREQLATLRVRGGVFVLETMVWPDEVRQPDFPFLEEDVAVRPQELSVAASLIHTLAADFDPTRYTDNYREALQAVIDAKVAGREVVASPGGPASEAVGDLMAALRASIAAARAGRPGEAAVAGGAAVAGGAAVADGDAGPAAAGVTDEGPDDKASDDKASDDKASDGRRGGRTSSVKGASSAPGTRSTARKTPSSTRSTAKTNAATKTPPAKTSAAKASAAKTSAAKATSSRTAPKTAPRTPTSKTPPTRRSA.

The region spanning 9-189 is the Ku domain; that stretch reads ISFGLVSIPV…DVAVRPQELS (181 aa). Low complexity predominate over residues 278–288; it reads DGDAGPAAAGV. The interval 278-396 is disordered; that stretch reads DGDAGPAAAG…SKTPPTRRSA (119 aa). Basic and acidic residues predominate over residues 294–312; that stretch reads DDKASDDKASDDKASDGRR. The segment covering 315–336 has biased composition (polar residues); that stretch reads RTSSVKGASSAPGTRSTARKTP. Over residues 337-396 the composition is skewed to low complexity; it reads SSTRSTAKTNAATKTPPAKTSAAKASAAKTSAAKATSSRTAPKTAPRTPTSKTPPTRRSA.

The protein belongs to the prokaryotic Ku family. In terms of assembly, homodimer. Interacts with LigD.

Functionally, with LigD forms a non-homologous end joining (NHEJ) DNA repair enzyme, which repairs dsDNA breaks with reduced fidelity. Binds linear dsDNA with 5'- and 3'- overhangs but not closed circular dsDNA nor ssDNA. Recruits and stimulates the ligase activity of LigD. This is Non-homologous end joining protein Ku from Frankia casuarinae (strain DSM 45818 / CECT 9043 / HFP020203 / CcI3).